A 486-amino-acid chain; its full sequence is Hydrogenobyrinate a,c-diamide synthase (486 aa).

Positions 254–272 (SPPPPLPVPSPGAAPPDPL) are enriched in pro residues. Positions 254-284 (SPPPPLPVPSPGAAPPDPLVRPGRPRPQAPD) are disordered. The GATase cobBQ-type domain maps to 289-474 (RVAMASGAAF…LHTHWAAEPG (186 aa)). Cysteine 372 functions as the Nucleophile in the catalytic mechanism.

Belongs to the CobB/CbiA family. Mg(2+) is required as a cofactor.

The enzyme catalyses hydrogenobyrinate + 2 L-glutamine + 2 ATP + 2 H2O = hydrogenobyrinate a,c-diamide + 2 L-glutamate + 2 ADP + 2 phosphate + 2 H(+). Its pathway is cofactor biosynthesis; adenosylcobalamin biosynthesis; cob(II)yrinate a,c-diamide from precorrin-2 (aerobic route): step 9/10. Functionally, catalyzes the ATP-dependent amidation of the two carboxylate groups at positions a and c of hydrogenobyrinate, using either L-glutamine or ammonia as the nitrogen source. This chain is Hydrogenobyrinate a,c-diamide synthase, found in Streptomyces coelicolor (strain ATCC BAA-471 / A3(2) / M145).